The chain runs to 100 residues: Urease subunit gamma (100 aa).

The protein belongs to the urease gamma subunit family. Heterotrimer of UreA (gamma), UreB (beta) and UreC (alpha) subunits. Three heterotrimers associate to form the active enzyme.

The protein resides in the cytoplasm. It carries out the reaction urea + 2 H2O + H(+) = hydrogencarbonate + 2 NH4(+). Its pathway is nitrogen metabolism; urea degradation; CO(2) and NH(3) from urea (urease route): step 1/1. The polypeptide is Urease subunit gamma (Leptothrix cholodnii (strain ATCC 51168 / LMG 8142 / SP-6) (Leptothrix discophora (strain SP-6))).